The following is a 174-amino-acid chain: Endoribonuclease YbeY (174 aa).

Residues histidine 129, histidine 133, and histidine 139 each contribute to the Zn(2+) site.

Belongs to the endoribonuclease YbeY family. The cofactor is Zn(2+).

It localises to the cytoplasm. Its function is as follows. Single strand-specific metallo-endoribonuclease involved in late-stage 70S ribosome quality control and in maturation of the 3' terminus of the 16S rRNA. The chain is Endoribonuclease YbeY from Lactobacillus acidophilus (strain ATCC 700396 / NCK56 / N2 / NCFM).